The following is an 89-amino-acid chain: Gallinacin-13 (89 aa).

Residues 1-23 form the signal peptide; sequence MRILQLLFAIVVILLLQDAPARG. 3 cysteine pairs are disulfide-bonded: Cys-30-Cys-58, Cys-37-Cys-51, and Cys-41-Cys-59. Residues 66–89 form a disordered region; sequence PFSNPKHSVLHTAEQDPSPSLGGT.

This sequence belongs to the beta-defensin family. As to expression, expressed in the liver, gall bladder, kidney, small intestine, spleen, testis, ovary and male and female reproductive tracts. Not detected in the ovarian stroma and the theca and granulosa layers of the ovarian follicle.

It is found in the secreted. The protein localises to the cytoplasmic granule. Has bactericidal activity. Potent activity against E.coli, L.monocytogenes, S.typhimurium and S.pyogenes but mot against S.aureus. Its function is as follows. Has bactericidal activity. The protein is Gallinacin-13 (GAL13) of Gallus gallus (Chicken).